Consider the following 177-residue polypeptide: Archaemetzincin (177 aa).

Residue H129 coordinates Zn(2+). The Proton acceptor role is filled by E130. Zn(2+) is bound by residues H133, H139, C140, C145, C164, and C167.

The protein belongs to the peptidase M54 family. In terms of assembly, monomer. Requires Zn(2+) as cofactor.

Functionally, probable zinc metalloprotease whose natural substrate is unknown. This is Archaemetzincin from Sulfolobus acidocaldarius (strain ATCC 33909 / DSM 639 / JCM 8929 / NBRC 15157 / NCIMB 11770).